A 422-amino-acid polypeptide reads, in one-letter code: Phagosome assembly factor 1 (422 aa).

Belongs to the PHAF1 family. Interacts with BCAS3; the interaction is requrired for the association with the phagophore.

It is found in the cytoplasm. The protein localises to the preautophagosomal structure. Plays a regulatory role in autophagic activity. In complex with BCAS3, associates with the autophagosome formation site during both non-selective and selective autophagy. The chain is Phagosome assembly factor 1 from Homo sapiens (Human).